A 255-amino-acid chain; its full sequence is Syntaxin-6 (255 aa).

The residue at position 2 (Ser-2) is an N-acetylserine. Ser-2 carries the phosphoserine modification. Positions 2-112 are interaction with BLTP3B; the sequence is SMEDPFFVVK…KDQMSASSVQ (111 aa). Residues 2-168 are required for interaction with VPS51; sequence SMEDPFFVVK…QAQQQLIVEQ (167 aa). At 2 to 234 the chain is on the cytoplasmic side; sequence SMEDPFFVVK…VSHMTSDRRQ (233 aa). Positions 41–74 form a coiled coil; that stretch reads EEIDWTTNELRNNLRSIEWDLEDLDETISIVEAN. Residues Ser-129 and Ser-152 each carry the phosphoserine modification. The region spanning 163-225 is the t-SNARE coiled-coil homology domain; the sequence is QLIVEQQDEQ…DNVMKKLAKV (63 aa). Residues 235–255 traverse the membrane as a helical; Anchor for type IV membrane protein segment; that stretch reads WCAIAILFAVLLVVLTLFLVL.

The protein belongs to the syntaxin family. As to quaternary structure, identified in a complex containing STX6, STX12, VAMP4 and VTI1A. Binds EEA1. Interacts with VPS45A and GOPC. Interacts with MARCHF2; the interaction promotes MARCHF2-mediated ubiquitination and degradation of CFTR. Interacts with MARCHF3. Interacts with BLTP3B (via C-terminal coiled-coil domain). Interacts with BAIAP3; this interaction is increased in the presence of calcium. Interacts (via N-terminus) with VPS51. Interacts with VPS13B. Widely expressed, with relatively higher expression in brain, lung and kidney.

It is found in the golgi apparatus membrane. The protein localises to the golgi apparatus. It localises to the trans-Golgi network membrane. The protein resides in the recycling endosome membrane. In terms of biological role, SNARE promoting movement of transport vesicles to target membranes. Targets endosomes to the trans-Golgi network, and may therefore function in retrograde trafficking. Together with SNARE STX12, promotes movement of vesicles from endosomes to the cell membrane, and may therefore function in the endocytic recycling pathway. The protein is Syntaxin-6 (Stx6) of Rattus norvegicus (Rat).